We begin with the raw amino-acid sequence, 343 residues long: Anthranilate phosphoribosyltransferase (343 aa).

5-phospho-alpha-D-ribose 1-diphosphate-binding positions include glycine 84, 87 to 88 (GD), threonine 92, 94 to 97 (NIST), 112 to 120 (KHGNRSVSS), and serine 124. Residue glycine 84 participates in anthranilate binding. A Mg(2+)-binding site is contributed by serine 96. Asparagine 115 lines the anthranilate pocket. Arginine 170 is an anthranilate binding site. 2 residues coordinate Mg(2+): aspartate 229 and glutamate 230.

It belongs to the anthranilate phosphoribosyltransferase family. In terms of assembly, homodimer. The cofactor is Mg(2+).

The catalysed reaction is N-(5-phospho-beta-D-ribosyl)anthranilate + diphosphate = 5-phospho-alpha-D-ribose 1-diphosphate + anthranilate. It participates in amino-acid biosynthesis; L-tryptophan biosynthesis; L-tryptophan from chorismate: step 2/5. In terms of biological role, catalyzes the transfer of the phosphoribosyl group of 5-phosphorylribose-1-pyrophosphate (PRPP) to anthranilate to yield N-(5'-phosphoribosyl)-anthranilate (PRA). This is Anthranilate phosphoribosyltransferase from Stenotrophomonas maltophilia (strain K279a).